The sequence spans 892 residues: Translation initiation factor IF-2 (892 aa).

The interval 88–304 (KKRTFVKRDP…SSLQQGFQKP (217 aa)) is disordered. Basic and acidic residues-rich tracts occupy residues 93–159 (VKRD…KDKV) and 166–216 (DMTK…EENK). Basic residues predominate over residues 254 to 269 (GRGRNAKAARPAKKGK). The span at 270 to 282 (HAESKADREEARA) shows a compositional bias: basic and acidic residues. The tr-type G domain occupies 391–560 (PRAPVVTIMG…LLQAEVLELK (170 aa)). A G1 region spans residues 400-407 (GHVDHGKT). Position 400 to 407 (400 to 407 (GHVDHGKT)) interacts with GTP. The segment at 425-429 (GITQH) is G2. Residues 446-449 (DTPG) form a G3 region. GTP contacts are provided by residues 446-450 (DTPGH) and 500-503 (NKID). The segment at 500-503 (NKID) is G4. Positions 536 to 538 (SAK) are G5.

It belongs to the TRAFAC class translation factor GTPase superfamily. Classic translation factor GTPase family. IF-2 subfamily.

Its subcellular location is the cytoplasm. Functionally, one of the essential components for the initiation of protein synthesis. Protects formylmethionyl-tRNA from spontaneous hydrolysis and promotes its binding to the 30S ribosomal subunits. Also involved in the hydrolysis of GTP during the formation of the 70S ribosomal complex. This Salmonella choleraesuis (strain SC-B67) protein is Translation initiation factor IF-2.